Reading from the N-terminus, the 486-residue chain is Uridine/cytidine kinase UKL1, chloroplastic (486 aa).

The transit peptide at 1–47 (MPEDSSSLDYAMEKASGPHFSGLRFDGLLSSSPPNSSVVSSLRSAVS) directs the protein to the chloroplast. The span at 31 to 54 (SSPPNSSVVSSLRSAVSSSSPSSS) shows a compositional bias: low complexity. Positions 31–67 (SSPPNSSVVSSLRSAVSSSSPSSSDPEAPKQPFIIGV) are disordered. The segment at 59-264 (PKQPFIIGVS…ITQHIHTKLG (206 aa)) is uridine kinase. A uracil phosphoribosyltransferase region spans residues 274 to 486 (NVYVIQSTFQ…RYFGTDEEDQ (213 aa)). Residues lysine 298, arginine 307, and 341–344 (CKKL) each bind GTP. 5-phospho-alpha-D-ribose 1-diphosphate-binding residues include arginine 351 and arginine 376. Arginine 396 contacts GTP. Residues aspartate 402, 407–410 (TGNS), and glutamate 473 contribute to the 5-phospho-alpha-D-ribose 1-diphosphate site. A uracil-binding site is contributed by 472 to 474 (GEF).

It in the N-terminal section; belongs to the uridine kinase family. The protein in the C-terminal section; belongs to the UPRTase family. Expressed in roots, leaves and stems.

It is found in the plastid. It localises to the chloroplast. The protein resides in the cytoplasm. It catalyses the reaction cytidine + ATP = CMP + ADP + H(+). The enzyme catalyses uridine + ATP = UMP + ADP + H(+). It participates in pyrimidine metabolism; CTP biosynthesis via salvage pathway; CTP from cytidine: step 1/3. It functions in the pathway pyrimidine metabolism; UMP biosynthesis via salvage pathway; UMP from uridine: step 1/1. Functionally, involved in the pyrimidine salvage pathway. Phosphorylates uridine to uridine monophosphate (UMP). Phosphorylates cytidine to cytidine monophosphate (CMP). Does not possess uracil phosphoribosyltransferase (UPRTase) activity that catalyzes the conversion of uracil and 5-phospho-alpha-D-ribose 1-diphosphate (PRPP) to UMP and diphosphate. The chain is Uridine/cytidine kinase UKL1, chloroplastic from Arabidopsis thaliana (Mouse-ear cress).